The primary structure comprises 399 residues: Elongation factor Tu (399 aa).

A tr-type G domain is found at 10–209; sequence KPHVNVGTIG…EVDKYIPTPQ (200 aa). The segment at 19-26 is G1; sequence GHVDHGKT. A GTP-binding site is contributed by 19 to 26; that stretch reads GHVDHGKT. Thr26 is a binding site for Mg(2+). Residues 60 to 64 are G2; the sequence is GITIA. The segment at 81 to 84 is G3; it reads DCPG. Residues 81-85 and 136-139 contribute to the GTP site; these read DCPGH and NKQD. The segment at 136-139 is G4; it reads NKQD. The G5 stretch occupies residues 174 to 176; sequence SAL.

This sequence belongs to the TRAFAC class translation factor GTPase superfamily. Classic translation factor GTPase family. EF-Tu/EF-1A subfamily. As to quaternary structure, monomer.

The protein resides in the cytoplasm. It catalyses the reaction GTP + H2O = GDP + phosphate + H(+). Its function is as follows. GTP hydrolase that promotes the GTP-dependent binding of aminoacyl-tRNA to the A-site of ribosomes during protein biosynthesis. This Helicobacter hepaticus (strain ATCC 51449 / 3B1) protein is Elongation factor Tu.